The sequence spans 142 residues: Large ribosomal subunit protein uL11 (142 aa).

This sequence belongs to the universal ribosomal protein uL11 family. In terms of assembly, part of the ribosomal stalk of the 50S ribosomal subunit. Interacts with L10 and the large rRNA to form the base of the stalk. L10 forms an elongated spine to which L12 dimers bind in a sequential fashion forming a multimeric L10(L12)X complex. One or more lysine residues are methylated.

Forms part of the ribosomal stalk which helps the ribosome interact with GTP-bound translation factors. The sequence is that of Large ribosomal subunit protein uL11 from Leptospira borgpetersenii serovar Hardjo-bovis (strain JB197).